Reading from the N-terminus, the 391-residue chain is uncharacterized protein (391 aa).

A run of 12 helical transmembrane segments spans residues 7–27 (FILV…LPVI), 39–59 (AING…SPFM), 66–88 (LGFK…GFIW), 92–111 (VWVW…MLHF), 131–151 (SIYG…VPLV), 156–176 (SLPF…VFFL), 197–217 (FYQA…YGFL), 239–259 (VAII…PLGI), 269–289 (VLLV…VFPS), 292–312 (VIGG…TLGI), 329–349 (LLCG…GGWY), and 356–376 (ANLF…LVLG).

This sequence belongs to the major facilitator superfamily.

Its subcellular location is the cell membrane. This is an uncharacterized protein from Bacillus subtilis (strain 168).